Here is a 175-residue protein sequence, read N- to C-terminus: Inosine/xanthosine triphosphatase (175 aa).

8-13 (TTNPAK) lines the substrate pocket. Mg(2+) contacts are provided by Asp-38 and Glu-68. 68–69 (EA) contributes to the substrate binding site.

This sequence belongs to the YjjX NTPase family. Homodimer. Mg(2+) is required as a cofactor. It depends on Mn(2+) as a cofactor.

The enzyme catalyses XTP + H2O = XDP + phosphate + H(+). It carries out the reaction ITP + H2O = IDP + phosphate + H(+). Functionally, phosphatase that hydrolyzes non-canonical purine nucleotides such as XTP and ITP to their respective diphosphate derivatives. Probably excludes non-canonical purines from DNA/RNA precursor pool, thus preventing their incorporation into DNA/RNA and avoiding chromosomal lesions. The polypeptide is Inosine/xanthosine triphosphatase (Yersinia enterocolitica serotype O:8 / biotype 1B (strain NCTC 13174 / 8081)).